The primary structure comprises 200 residues: Probable nicotinate-nucleotide adenylyltransferase (200 aa).

This sequence belongs to the NadD family.

It catalyses the reaction nicotinate beta-D-ribonucleotide + ATP + H(+) = deamido-NAD(+) + diphosphate. It functions in the pathway cofactor biosynthesis; NAD(+) biosynthesis; deamido-NAD(+) from nicotinate D-ribonucleotide: step 1/1. Catalyzes the reversible adenylation of nicotinate mononucleotide (NaMN) to nicotinic acid adenine dinucleotide (NaAD). This chain is Probable nicotinate-nucleotide adenylyltransferase, found in Clostridium novyi (strain NT).